The sequence spans 700 residues: ABC transporter B family member 26, chloroplastic (700 aa).

Residues 1-59 constitute a chloroplast transit peptide; the sequence is MAQQVLGCTSRPIRVSLHRCSVITTSDTIRRKNLRFVRNPRLSFSLQSSTRNYRLPSIN. 3 helical membrane-spanning segments follow: residues 137-157, 182-202, and 268-288; these read WVIFAAFSTLIVAALSEITIP, LVTLCVTSGICSGIRGCFFGI, and LIYLLILSWPLGLCTLVICCI. The region spanning 139–421 is the ABC transmembrane type-1 domain; sequence IFAAFSTLIV…VGDNLSSLMQ (283 aa). Residues 455-694 form the ABC transporter domain; that stretch reads IEFVDVSFSY…DGLYARLTKR (240 aa). 490–497 contacts ATP; sequence GLSGSGKS.

It belongs to the ABC transporter superfamily. ABCB family. Multidrug resistance exporter (TC 3.A.1.201) subfamily.

The protein resides in the plastid. Its subcellular location is the chloroplast membrane. This chain is ABC transporter B family member 26, chloroplastic (ABCB26), found in Arabidopsis thaliana (Mouse-ear cress).